Consider the following 30-residue polypeptide: Cycloviolacin-H3 (30 aa).

A cross-link (cyclopeptide (Gly-Asn)) is located at residues 1-30 (GLPVCGETCFGGTCNTPGCICDPWPVCTRN). Cystine bridges form between Cys-5/Cys-19, Cys-9/Cys-21, and Cys-14/Cys-27.

Post-translationally, this is a cyclic peptide.

Its function is as follows. Probably participates in a plant defense mechanism. The polypeptide is Cycloviolacin-H3 (Viola hederacea (Australian violet)).